Here is a 428-residue protein sequence, read N- to C-terminus: Enolase (428 aa).

Gln-163 is a binding site for (2R)-2-phosphoglycerate. The Proton donor role is filled by Glu-205. Asp-242, Glu-285, and Asp-312 together coordinate Mg(2+). Positions 337, 366, 367, and 388 each coordinate (2R)-2-phosphoglycerate. Lys-337 (proton acceptor) is an active-site residue.

This sequence belongs to the enolase family. It depends on Mg(2+) as a cofactor.

It localises to the cytoplasm. The protein resides in the secreted. Its subcellular location is the cell surface. It catalyses the reaction (2R)-2-phosphoglycerate = phosphoenolpyruvate + H2O. The protein operates within carbohydrate degradation; glycolysis; pyruvate from D-glyceraldehyde 3-phosphate: step 4/5. Its function is as follows. Catalyzes the reversible conversion of 2-phosphoglycerate (2-PG) into phosphoenolpyruvate (PEP). It is essential for the degradation of carbohydrates via glycolysis. In Nitrosomonas eutropha (strain DSM 101675 / C91 / Nm57), this protein is Enolase.